The chain runs to 450 residues: Glutamate--tRNA ligase 1 (450 aa).

The short motif at 7 to 17 (PSPTGYMHVGN) is the 'HIGH' region element. A 'KMSKS' region motif is present at residues 236–240 (KISKR). Lys239 is a binding site for ATP.

This sequence belongs to the class-I aminoacyl-tRNA synthetase family. Glutamate--tRNA ligase type 1 subfamily. As to quaternary structure, monomer.

The protein resides in the cytoplasm. The catalysed reaction is tRNA(Glu) + L-glutamate + ATP = L-glutamyl-tRNA(Glu) + AMP + diphosphate. Its function is as follows. Catalyzes the attachment of glutamate to tRNA(Glu) in a two-step reaction: glutamate is first activated by ATP to form Glu-AMP and then transferred to the acceptor end of tRNA(Glu). This Anaplasma phagocytophilum (strain HZ) protein is Glutamate--tRNA ligase 1.